The chain runs to 187 residues: MRFFNIFSSSFTSTAKWSCPNKLKISSEDIRNFKDTLIAMKGRRMNATAMRLLTNETNYKVTIEVSTKAIRALKKVIRRGVGQYQPGSKTDQLITSFKEVKQEYDEMILKMDIKMVPSKADYVIECWLKKDAAEKAAKESKDRKALKNAARKAEKNAHEESSYFRVDDPEPEPQNIYRIDPIIEIYV.

The span at 139-168 (ESKDRKALKNAARKAEKNAHEESSYFRVDD) shows a compositional bias: basic and acidic residues. Residues 139 to 172 (ESKDRKALKNAARKAEKNAHEESSYFRVDDPEPE) are disordered.

This is an uncharacterized protein from Caenorhabditis elegans.